The following is a 193-amino-acid chain: Putative deoxynucleotide monophosphate kinase (193 aa).

Residue lysine 10 coordinates dGMP. Positions 13 and 16 each coordinate ATP. Positions 36, 37, 58, 122, 124, 128, and 155 each coordinate dGMP.

It belongs to the dNMP kinase family.

It catalyses the reaction a 2'-deoxyribonucleoside 5'-phosphate + ATP = a 2'-deoxyribonucleoside 5'-diphosphate + ADP. This is Putative deoxynucleotide monophosphate kinase from Acanthamoeba polyphaga mimivirus (APMV).